The following is a 956-amino-acid chain: Probable hypoxanthine oxidase XdhD (956 aa).

Mo-molybdopterin-binding residues include Q414, F445, and A727.

The protein belongs to the xanthine dehydrogenase family. The cofactor is [2Fe-2S] cluster. Requires Mo-molybdopterin as cofactor.

Probably has no xanthine dehydrogenase activity; however deletion results in increased adenine sensitivity, suggesting that this protein contributes to the conversion of adenine to guanine nucleotides during purine salvage. In Escherichia coli (strain K12), this protein is Probable hypoxanthine oxidase XdhD (xdhD).